A 226-amino-acid chain; its full sequence is Deoxyribose-phosphate aldolase (226 aa).

Asp-95 acts as the Proton donor/acceptor in catalysis. The Schiff-base intermediate with acetaldehyde role is filled by Lys-157. Lys-186 serves as the catalytic Proton donor/acceptor.

It belongs to the DeoC/FbaB aldolase family. DeoC type 1 subfamily.

The protein resides in the cytoplasm. It carries out the reaction 2-deoxy-D-ribose 5-phosphate = D-glyceraldehyde 3-phosphate + acetaldehyde. The protein operates within carbohydrate degradation; 2-deoxy-D-ribose 1-phosphate degradation; D-glyceraldehyde 3-phosphate and acetaldehyde from 2-deoxy-alpha-D-ribose 1-phosphate: step 2/2. Its activity is regulated as follows. Partially inhibited by acetaldehyde. After incubation for 2, 4 and 6 hours in 300 mM acetaldehyde at 25 degrees Celsius, retains approximately 61.32%, 42.33% and 34.73% of the initial 2-deoxy-D-ribose-5-phosphate (DR5P) cleavage activity, respectively. Catalyzes a reversible aldol reaction between acetaldehyde and D-glyceraldehyde 3-phosphate to generate 2-deoxy-D-ribose 5-phosphate. Its function is as follows. In vitro, DERA can catalyze the aldol condensation of chloroacetaldehyde (CHAD) and acetaldehyde (ACD), yielding (S)-4-chloro-3-hydroxybutanal ((S)-CHB), which can combine with another aldehyde to form (3R,5S)-6-chloro-2,4,6-trideoxyhexapyranose (CTeHP), a key intermediate for statin drugs. The chain is Deoxyribose-phosphate aldolase from Pseudomonas syringae pv. syringae (strain B728a).